A 494-amino-acid polypeptide reads, in one-letter code: UDP-N-acetylmuramate--L-alanine ligase (494 aa).

140–146 (GTHGKTT) contributes to the ATP binding site.

This sequence belongs to the MurCDEF family.

The protein localises to the cytoplasm. It catalyses the reaction UDP-N-acetyl-alpha-D-muramate + L-alanine + ATP = UDP-N-acetyl-alpha-D-muramoyl-L-alanine + ADP + phosphate + H(+). The protein operates within cell wall biogenesis; peptidoglycan biosynthesis. Cell wall formation. The sequence is that of UDP-N-acetylmuramate--L-alanine ligase from Trichormus variabilis (strain ATCC 29413 / PCC 7937) (Anabaena variabilis).